A 312-amino-acid polypeptide reads, in one-letter code: Methionyl-tRNA formyltransferase (312 aa).

109-112 provides a ligand contact to (6S)-5,6,7,8-tetrahydrofolate; the sequence is SLLP.

This sequence belongs to the Fmt family.

The catalysed reaction is L-methionyl-tRNA(fMet) + (6R)-10-formyltetrahydrofolate = N-formyl-L-methionyl-tRNA(fMet) + (6S)-5,6,7,8-tetrahydrofolate + H(+). In terms of biological role, attaches a formyl group to the free amino group of methionyl-tRNA(fMet). The formyl group appears to play a dual role in the initiator identity of N-formylmethionyl-tRNA by promoting its recognition by IF2 and preventing the misappropriation of this tRNA by the elongation apparatus. In Listeria monocytogenes serovar 1/2a (strain ATCC BAA-679 / EGD-e), this protein is Methionyl-tRNA formyltransferase.